The sequence spans 135 residues: Small ribosomal subunit protein uS11 (135 aa).

It belongs to the universal ribosomal protein uS11 family. In terms of assembly, part of the 30S ribosomal subunit. Interacts with proteins S7 and S18. Binds to IF-3.

Located on the platform of the 30S subunit, it bridges several disparate RNA helices of the 16S rRNA. Forms part of the Shine-Dalgarno cleft in the 70S ribosome. This Polynucleobacter necessarius subsp. necessarius (strain STIR1) protein is Small ribosomal subunit protein uS11.